Consider the following 266-residue polypeptide: rRNA adenine N-6-methyltransferase (266 aa).

H14, T16, G41, E62, D87, and N103 together coordinate S-adenosyl-L-methionine.

This sequence belongs to the class I-like SAM-binding methyltransferase superfamily. rRNA adenine N(6)-methyltransferase family.

Its function is as follows. Involved in erythromycin resistance. This is rRNA adenine N-6-methyltransferase (ermFU) from Bacteroides fragilis.